Reading from the N-terminus, the 283-residue chain is HTH-type transcriptional activator RhaR (283 aa).

An HTH araC/xylS-type domain is found at 179-277; sequence DLLMAALGNS…GVTPRVWRQQ (99 aa). 2 consecutive DNA-binding regions (H-T-H motif) follow at residues 196–217 and 244–267; these read QHFCSHYQIAERPLRQLFRQQT and ISEIAARCGFEDSNYFSVVFTRET.

Binds DNA as a dimer.

The protein localises to the cytoplasm. In terms of biological role, activates expression of the rhaSR operon in response to L-rhamnose. This chain is HTH-type transcriptional activator RhaR, found in Cronobacter sakazakii (strain ATCC BAA-894) (Enterobacter sakazakii).